Here is an 88-residue protein sequence, read N- to C-terminus: Small ribosomal subunit protein bS16 (88 aa).

This sequence belongs to the bacterial ribosomal protein bS16 family.

In Staphylococcus saprophyticus subsp. saprophyticus (strain ATCC 15305 / DSM 20229 / NCIMB 8711 / NCTC 7292 / S-41), this protein is Small ribosomal subunit protein bS16.